The chain runs to 806 residues: Leucine--tRNA ligase (806 aa).

The short motif at 38-48 is the 'HIGH' region element; the sequence is PYPSGEIHMGH. Positions 572-576 match the 'KMSKS' region motif; sequence KMSKS. Lys575 provides a ligand contact to ATP.

Belongs to the class-I aminoacyl-tRNA synthetase family.

It localises to the cytoplasm. It carries out the reaction tRNA(Leu) + L-leucine + ATP = L-leucyl-tRNA(Leu) + AMP + diphosphate. This is Leucine--tRNA ligase from Helicobacter pylori (strain J99 / ATCC 700824) (Campylobacter pylori J99).